The chain runs to 616 residues: Homeodomain-interacting protein kinase 4 (616 aa).

A Protein kinase domain is found at 11-347; it reads YDIIEVLGKG…PSAALRHPFV (337 aa). Residues 17–25 and Lys40 each bind ATP; that span reads LGKGTFGEV. Asp136 acts as the Proton acceptor in catalysis. Residues 485-616 are disordered; sequence RHKARKPPAG…SFLQHVTGHH (132 aa). Residues 496-511 show a composition bias toward polar residues; it reads KSDSNLSNLIRLSQVS. At Ser511 the chain carries Phosphoserine.

This sequence belongs to the protein kinase superfamily. CMGC Ser/Thr protein kinase family. HIPK subfamily. In terms of processing, autophosphorylated.

The protein resides in the cytoplasm. It carries out the reaction L-seryl-[protein] + ATP = O-phospho-L-seryl-[protein] + ADP + H(+). The enzyme catalyses L-threonyl-[protein] + ATP = O-phospho-L-threonyl-[protein] + ADP + H(+). Protein kinase that phosphorylates TP53, and thus induces TP53 repression of BIRC5 promoter. May act as a corepressor of transcription factors (Potential). This is Homeodomain-interacting protein kinase 4 (HIPK4) from Macaca fascicularis (Crab-eating macaque).